The following is a 902-amino-acid chain: MMNRSEMQKLGFEHVRYYTESPYNRGESSANVATTSNYYGEDEPYVEITLDIHDDSVSVYGLKSPNHRGAGSNYEDQSLLRQGRSGRSNSVLKRLASSVSTGITRVASSVSSSSARKPPRPQLAKLRRSKSRAELALKGLKFITKTDGVTGWPEVEKRFYVMTMTTNGLLHRSRFGECIGMKSTEFALALFDALARRENVSGDSININELKEFWKQITDQDFDSRLRTFFAMVDKDSDGRLNEAEVREIITLSASANELDNIRRQADEYAALIMEELDPYHYGYIMIENLEILLLQAPMQDVRDGEGKKLSKMLSQNLMVPQSRNLGARFCRGMKYFLFDNWKRVWVMALWIGAMAGLFTWKFMEYRKRSAYEVMGVCVCIAKGAAETLKLNMAMILLPVCRNTITWLRTKTKLSAIVPFDDSLNFHKVIAIGISVGVGIHATSHLACDFPRLIAADEDQYEPMEKYFGPQTKRYLDFVQSVEGVTGIGMVVLMTIAFTLATTWFRRNKLNLPGPLKKITGFNAFWYSHHLFVIVYSLLVVHGFYVYLIIEPWYKKTTWMYLMVPVVLYLCERLIRAFRSSVEAVSVLKVAVLPGNVLSLHLSRPSNFRYKSGQYMYLNCSAVSTLEWHPFSITSAPGDDYLSVHIRVLGDWTKQLRSLFSEVCKPRPPDEHRLNRADSKHWDYIPDFPRILIDGPYGAPAQDYKKFEVVLLVGLGIGATPMISIVSDIINNLKGVEEGSNRRQSPIHNMVTPPVSPSRKSETFRTKRAYFYWVTREQGSFDWFKNVMDEVTETDRKNVIELHNYCTSVYEEGDARSALITMLQSLNHAKHGVDVVSGTRVMSHFARPNWRSVFKRIAVNHPKTRVGVFYCGAAGLVKELRHLSLDFSHKTSTKFIFHKENF.

Residues M1–R344 are Cytoplasmic-facing. Disordered regions lie at residues K63–R87 and A107–K130. Residues Y74–R87 are compositionally biased toward polar residues. Residues A107 to R116 are compositionally biased toward low complexity. 2 EF-hand-like regions span residues T163 to S173 and E198 to E209. EF-hand domains are found at residues D221–A256 and Q265–Q300. Ca(2+) contacts are provided by D234, D236, D238, R240, and E245. Phosphoserine occurs at positions 311 and 315. The helical transmembrane segment at V345–E365 threads the bilayer. The Extracellular segment spans residues Y366–C380. A helical transmembrane segment spans residues I381–C401. In terms of domain architecture, Ferric oxidoreductase spans K383 to V540. Residues R402–K428 lie on the Cytoplasmic side of the membrane. A helical membrane pass occupies residues V429–D449. Over F450–G484 the chain is Extracellular. The chain crosses the membrane as a helical span at residues V485–F505. The Cytoplasmic segment spans residues R506–H529. The helical transmembrane segment at H530–I550 threads the bilayer. Topologically, residues E551–V709 are extracellular. In terms of domain architecture, FAD-binding FR-type spans I575–D703. Residues V710–I730 traverse the membrane as a helical segment. The Cytoplasmic segment spans residues N731–F902. The segment at E738 to K760 is disordered.

The protein belongs to the RBOH (TC 5.B.1.3) family. Monomer and homodimer.

It localises to the membrane. In terms of biological role, calcium-dependent NADPH oxidase that generates superoxide. The polypeptide is Respiratory burst oxidase homolog protein A (RBOHA) (Arabidopsis thaliana (Mouse-ear cress)).